A 437-amino-acid polypeptide reads, in one-letter code: Ribulose bisphosphate carboxylase-like protein (437 aa).

Residue Lys-176 is the Proton acceptor of the active site. Mg(2+) is bound by residues Lys-202, Asp-204, and Glu-205. Lys-202 carries the post-translational modification N6-carboxylysine. The Proton acceptor role is filled by His-293.

It belongs to the RuBisCO large chain family. Type IV subfamily. Homodimer. Mg(2+) is required as a cofactor.

In terms of biological role, may be involved in sulfur metabolism and oxidative stress response. Does not show RuBisCO activity. This chain is Ribulose bisphosphate carboxylase-like protein, found in Archaeoglobus fulgidus (strain ATCC 49558 / DSM 4304 / JCM 9628 / NBRC 100126 / VC-16).